The chain runs to 303 residues: Zinc import ATP-binding protein ZnuC (303 aa).

The ABC transporter domain occupies 17–232 (VSLENVGVLR…PEYVRLFGSR (216 aa)). 49 to 56 (GPNGSGKS) contributes to the ATP binding site. Positions 263–303 (DHCHPDDGHHAHEHGHAGHEHDHDHPDHAHPHAHEAGERHA) are disordered.

The protein belongs to the ABC transporter superfamily. Zinc importer (TC 3.A.1.15.5) family. In terms of assembly, the complex is composed of two ATP-binding proteins (ZnuC), two transmembrane proteins (ZnuB) and a solute-binding protein (ZnuA).

It is found in the cell inner membrane. The enzyme catalyses Zn(2+)(out) + ATP(in) + H2O(in) = Zn(2+)(in) + ADP(in) + phosphate(in) + H(+)(in). In terms of biological role, part of the ABC transporter complex ZnuABC involved in zinc import. Responsible for energy coupling to the transport system. The protein is Zinc import ATP-binding protein ZnuC of Rhizobium johnstonii (strain DSM 114642 / LMG 32736 / 3841) (Rhizobium leguminosarum bv. viciae).